The chain runs to 660 residues: Phosphatidylinositol-binding clathrin assembly protein (660 aa).

Position 2 is an N-acetylserine (S2). An ENTH domain is found at 14–145 (QHSVTGSAVS…VSYRQVAFDF (132 aa)). A phosphoserine mark is found at S16 and S20. Residues 221–294 (KYFDMKKNQC…LEGKKIKDST (74 aa)) are interaction with PIMREG. K238 is covalently cross-linked (Glycyl lysine isopeptide (Lys-Gly) (interchain with G-Cter in SUMO2)). Phosphoserine occurs at positions 303 and 315. Over residues 556–566 (GTTKNDVSWSQ) the composition is skewed to polar residues. A disordered region spans residues 556–580 (GTTKNDVSWSQPGEKKLTGGSNWQP).

The protein belongs to the PICALM/SNAP91 family. Binds to clathrin; involves primarily the C-terminal sequences, but the full-length protein is required for full binding capacity. Binds phosphatidylinositol 4,5- bisphosphate. Interacts with PIMREG; this interaction may change the subcellular location into the nucleus. Interacts with AP2A1 (via its alpha-appendage domain). Interacts (via N-terminus) with VAMP2; VAMP3; VAMP7 and VAMP8 (Via N-terminus). Interacts with LC3/MAP1LC3A. In terms of tissue distribution, skins and livers of 1-week-old mice.

Its subcellular location is the cell membrane. The protein resides in the membrane. The protein localises to the clathrin-coated pit. It localises to the golgi apparatus. It is found in the cytoplasmic vesicle. Its subcellular location is the clathrin-coated vesicle. The protein resides in the nucleus. Functionally, cytoplasmic adapter protein that plays a critical role in clathrin-mediated endocytosis which is important in processes such as internalization of cell receptors, synaptic transmission or removal of apoptotic cells. Recruits AP-2 and attaches clathrin triskelions to the cytoplasmic side of plasma membrane leading to clathrin-coated vesicles (CCVs) assembly. Furthermore, regulates clathrin-coated vesicle size and maturation by directly sensing and driving membrane curvature. In addition to binding to clathrin, mediates the endocytosis of small R-SNARES (Soluble NSF Attachment Protein REceptors) between plasma membranes and endosomes including VAMP2, VAMP3, VAMP4, VAMP7 or VAMP8. In turn, PICALM-dependent SNARE endocytosis is required for the formation and maturation of autophagic precursors. Modulates thereby autophagy and the turnover of autophagy substrates such as MAPT/TAU or amyloid precursor protein cleaved C-terminal fragment (APP-CTF). The chain is Phosphatidylinositol-binding clathrin assembly protein (Picalm) from Mus musculus (Mouse).